The following is a 603-amino-acid chain: Myotubularin (603 aa).

Over residues 1 to 13 (MASASTSKYNSHS) the composition is skewed to polar residues. The disordered stretch occupies residues 1 to 25 (MASASTSKYNSHSLENESIKRTSRD). Ser13 and Ser18 each carry phosphoserine. Positions 14–25 (LENESIKRTSRD) are enriched in basic and acidic residues. A GRAM domain is found at 29–97 (RDLTEAVPRL…GVISRIEKMG (69 aa)). The Myotubularin phosphatase domain maps to 163 to 538 (GWTVYNPVEE…RHLELWVNYY (376 aa)). A 1,2-diacyl-sn-glycero-3-phospho-(1D-myo-inositol-3,5-bisphosphate) is bound by residues Asn288, Asn313, and Ile314. The a 1,2-diacyl-sn-glycero-3-phospho-(1D-myo-inositol-3-phosphate) site is built by Asn288, Asn313, and Ile314. Cys375 functions as the Phosphocysteine intermediate in the catalytic mechanism. A 1,2-diacyl-sn-glycero-3-phospho-(1D-myo-inositol-3,5-bisphosphate) is bound by residues Ser376, Asp377, Gly378, Trp379, Asp380, Arg381, Lys417, and Arg421. Positions 376, 377, 378, 379, 380, and 381 each coordinate a 1,2-diacyl-sn-glycero-3-phospho-(1D-myo-inositol-3-phosphate). A 1,2-diacyl-sn-glycero-3-phospho-(1D-myo-inositol-3-phosphate) is bound at residue Arg421. Thr495 carries the post-translational modification Phosphothreonine. Residues 579-603 (SAKLSDPPTSPSSPSQMMPHVQTHF) are disordered. Phosphoserine is present on Ser588.

This sequence belongs to the protein-tyrosine phosphatase family. Non-receptor class myotubularin subfamily. Heterodimer with MTMR12. Interacts with KMT2A/MLL1 (via SET domain). Interacts with DES in skeletal muscle but not in cardiac muscle. Interacts with SPEG.

It localises to the cytoplasm. Its subcellular location is the cell membrane. It is found in the cell projection. The protein resides in the filopodium. The protein localises to the ruffle. It localises to the late endosome. Its subcellular location is the myofibril. It is found in the sarcomere. The enzyme catalyses a 1,2-diacyl-sn-glycero-3-phospho-(1D-myo-inositol-3-phosphate) + H2O = a 1,2-diacyl-sn-glycero-3-phospho-(1D-myo-inositol) + phosphate. It catalyses the reaction a 1,2-diacyl-sn-glycero-3-phospho-(1D-myo-inositol-3,5-bisphosphate) + H2O = a 1,2-diacyl-sn-glycero-3-phospho-(1D-myo-inositol-5-phosphate) + phosphate. It carries out the reaction 1,2-dioctanoyl-sn-glycero-3-phospho-(1-D-myo-inositol-3-phosphate) + H2O = 1,2-dioctanoyl-sn-glycero-3-phospho-(1D-myo-inositol) + phosphate. The catalysed reaction is 1,2-dioctanoyl-sn-glycero-3-phospho-(1D-myo-inositol-3,5-bisphosphate) + H2O = 1,2-dioctanoyl-sn-glycero-3-phospho-(1D-myo-inositol-5-phosphate) + phosphate. The enzyme catalyses 1,2-dihexadecanoyl-sn-glycero-3-phospho-(1D-myo-inositol-3,5-phosphate) + H2O = 1,2-dihexadecanoyl-sn-glycero-3-phospho-(1D-myo-inositol-5-phosphate) + phosphate. With respect to regulation, allosterically activated by phosphatidylinositol 5-phosphate (PI5P). Lipid phosphatase which dephosphorylates phosphatidylinositol 3-monophosphate (PI3P) and phosphatidylinositol 3,5-bisphosphate (PI(3,5)P2). Has also been shown to dephosphorylate phosphotyrosine- and phosphoserine-containing peptides. Negatively regulates EGFR degradation through regulation of EGFR trafficking from the late endosome to the lysosome. Plays a role in vacuolar formation and morphology. Regulates desmin intermediate filament assembly and architecture. Plays a role in mitochondrial morphology and positioning. Required for skeletal muscle maintenance but not for myogenesis. In skeletal muscles, stabilizes MTMR12 protein levels. This Pongo abelii (Sumatran orangutan) protein is Myotubularin.